The primary structure comprises 470 residues: MKKTKIVCTIGPKTESEEMLSKMLDAGMNVMRLNFSHGDYAEHGQRIQNLRNVMSKTGKKAAILLDTKGPEIRTIKLEGGNDVSLKAGQTFTFTTDKSVVGNNEIVAVTYEGFTSDLSVGNTVLVDDGLIGMEVTAIEGNKVICKVLNNGDLGENKGVNLPGVSIALPALAEKDKQDLIFGCEQGVDFVAASFIRKRSDVVEIREHLKAHGGENIQIISKIENQEGLNNFDEILEASDGIMVARGDLGVEIPVEEVIFAQKMMIEKCIRARKVVITATQMLDSMIKNPRPTRAEAGDVANAILDGTDAVMLSGESAKGKYPLEAVSIMATICERTDRVMNSRLDYNNDSRKLRITEAVCRGAVETAEKLEAPLIVVATQGGKSARAVRKYFPDATILALTTNEVTARQLVLSKGVVSQLVKEINSTDDFYRLGKDVALQSGLAQKGDVVVMVSGALVPSGTTNTASVHVL.

Residue arginine 32 participates in substrate binding. K(+) contacts are provided by asparagine 34, serine 36, aspartate 66, and threonine 67. Residue 34-37 (NFSH) participates in ATP binding. Positions 73 and 156 each coordinate ATP. Lysine 220 contacts substrate. Mg(2+) is bound at residue glutamate 222. The substrate site is built by glycine 245, aspartate 246, and threonine 278. Aspartate 246 serves as a coordination point for Mg(2+).

This sequence belongs to the pyruvate kinase family. Homotetramer. Requires Mg(2+) as cofactor. K(+) is required as a cofactor.

The enzyme catalyses pyruvate + ATP = phosphoenolpyruvate + ADP + H(+). The protein operates within carbohydrate degradation; glycolysis; pyruvate from D-glyceraldehyde 3-phosphate: step 5/5. With respect to regulation, belongs to type I PK; fructose 1,6-bisphosphate-activated. Catalyzes the formation of pyruvate in the last step of glycolysis, it is irreversible under physiological conditions. The reaction is critical for the control of metabolic flux in the second part of glycolysis. The protein is Pyruvate kinase I (pykF) of Salmonella typhimurium (strain LT2 / SGSC1412 / ATCC 700720).